The primary structure comprises 416 residues: Peptide chain release factor subunit 1 (416 aa).

It belongs to the eukaryotic release factor 1 family. Heterodimer of two subunits, one of which binds GTP.

Its subcellular location is the cytoplasm. Directs the termination of nascent peptide synthesis (translation) in response to the termination codons UAA, UAG and UGA. The chain is Peptide chain release factor subunit 1 from Halorubrum lacusprofundi (strain ATCC 49239 / DSM 5036 / JCM 8891 / ACAM 34).